The chain runs to 338 residues: Ribosomal RNA small subunit methyltransferase H (338 aa).

Residues 46-48 (GGY), D63, F90, D106, and Q113 each bind S-adenosyl-L-methionine.

Belongs to the methyltransferase superfamily. RsmH family.

It localises to the cytoplasm. It carries out the reaction cytidine(1402) in 16S rRNA + S-adenosyl-L-methionine = N(4)-methylcytidine(1402) in 16S rRNA + S-adenosyl-L-homocysteine + H(+). In terms of biological role, specifically methylates the N4 position of cytidine in position 1402 (C1402) of 16S rRNA. The protein is Ribosomal RNA small subunit methyltransferase H of Mesorhizobium japonicum (strain LMG 29417 / CECT 9101 / MAFF 303099) (Mesorhizobium loti (strain MAFF 303099)).